The sequence spans 161 residues: Cyclic pyranopterin monophosphate synthase (161 aa).

Substrate is bound by residues 75–77 and 113–114; these read LCH and ME. Aspartate 128 is an active-site residue.

Belongs to the MoaC family. In terms of assembly, homohexamer; trimer of dimers.

It catalyses the reaction (8S)-3',8-cyclo-7,8-dihydroguanosine 5'-triphosphate = cyclic pyranopterin phosphate + diphosphate. The protein operates within cofactor biosynthesis; molybdopterin biosynthesis. In terms of biological role, catalyzes the conversion of (8S)-3',8-cyclo-7,8-dihydroguanosine 5'-triphosphate to cyclic pyranopterin monophosphate (cPMP). In Enterobacter sp. (strain 638), this protein is Cyclic pyranopterin monophosphate synthase.